The sequence spans 117 residues: Fluoride-specific ion channel FluC 2 (117 aa).

The next 2 helical transmembrane spans lie at 1-21 (MISIILVMIGGGFGAIARSAI) and 46-66 (FLIGLTIGLSISISWFPAFFV). Positions 71 and 74 each coordinate Na(+). The chain crosses the membrane as a helical span at residues 95 to 115 (LFLNYSLLQFIIGFIACYIGY).

It belongs to the fluoride channel Fluc/FEX (TC 1.A.43) family.

It is found in the cell membrane. The enzyme catalyses fluoride(in) = fluoride(out). With respect to regulation, na(+) is not transported, but it plays an essential structural role and its presence is essential for fluoride channel function. Fluoride-specific ion channel. Important for reducing fluoride concentration in the cell, thus reducing its toxicity. This chain is Fluoride-specific ion channel FluC 2, found in Staphylococcus aureus (strain Mu50 / ATCC 700699).